The following is a 167-amino-acid chain: Phosphopantetheine adenylyltransferase (167 aa).

Ser-8 lines the substrate pocket. ATP contacts are provided by residues 8-9 (SF) and His-16. Lys-40, Leu-74, and Arg-88 together coordinate substrate. Residues 89 to 91 (GLR), Glu-99, and 123 to 129 (WSFVSSS) contribute to the ATP site.

The protein belongs to the bacterial CoaD family. In terms of assembly, homohexamer. Requires Mg(2+) as cofactor.

It localises to the cytoplasm. The catalysed reaction is (R)-4'-phosphopantetheine + ATP + H(+) = 3'-dephospho-CoA + diphosphate. It functions in the pathway cofactor biosynthesis; coenzyme A biosynthesis; CoA from (R)-pantothenate: step 4/5. Reversibly transfers an adenylyl group from ATP to 4'-phosphopantetheine, yielding dephospho-CoA (dPCoA) and pyrophosphate. This chain is Phosphopantetheine adenylyltransferase, found in Deinococcus radiodurans (strain ATCC 13939 / DSM 20539 / JCM 16871 / CCUG 27074 / LMG 4051 / NBRC 15346 / NCIMB 9279 / VKM B-1422 / R1).